The primary structure comprises 351 residues: Glycerol-1-phosphate dehydrogenase [NAD(P)+] (351 aa).

NAD(+)-binding positions include Gly-98–Asp-102 and Thr-120–Ser-123. A substrate-binding site is contributed by Asp-125. NAD(+) is bound at residue Ser-129. Position 172 (Asp-172) interacts with substrate. Positions 172 and 252 each coordinate Zn(2+). Residue His-256 participates in substrate binding. Position 268 (His-268) interacts with Zn(2+).

It belongs to the glycerol-1-phosphate dehydrogenase family. It depends on Zn(2+) as a cofactor.

It is found in the cytoplasm. The catalysed reaction is sn-glycerol 1-phosphate + NAD(+) = dihydroxyacetone phosphate + NADH + H(+). The enzyme catalyses sn-glycerol 1-phosphate + NADP(+) = dihydroxyacetone phosphate + NADPH + H(+). The protein operates within membrane lipid metabolism; glycerophospholipid metabolism. In terms of biological role, catalyzes the NAD(P)H-dependent reduction of dihydroxyacetonephosphate (DHAP or glycerone phosphate) to glycerol 1-phosphate (G1P). The G1P thus generated is used as the glycerophosphate backbone of phospholipids in the cellular membranes of Archaea. This Thermococcus kodakarensis (strain ATCC BAA-918 / JCM 12380 / KOD1) (Pyrococcus kodakaraensis (strain KOD1)) protein is Glycerol-1-phosphate dehydrogenase [NAD(P)+].